We begin with the raw amino-acid sequence, 220 residues long: Vesicle-associated membrane protein 7 (220 aa).

Ala-2 carries the post-translational modification N-acetylalanine; partial. The Cytoplasmic portion of the chain corresponds to 2-188 (AILFAVVARG…ARAMCMKNLK (187 aa)). The Longin domain occupies 7–110 (VVARGTTILA…AMNSEFSSVL (104 aa)). Residues 125 to 185 (KVMETQAQVD…RNLARAMCMK (61 aa)) form the v-SNARE coiled-coil homology domain. Phosphoserine is present on residues Ser-167 and Ser-168. The chain crosses the membrane as a helical; Anchor for type IV membrane protein span at residues 189 to 209 (LTIIIIIVSIVFIYIIVSPLC). Residues 210-220 (GGFTWPSCVKK) are Vesicular-facing.

It belongs to the synaptobrevin family. In terms of assembly, component of the SNARE complex composed of STX4, SNAP23 and VAMP7 that binds SYT7 during lysosomal exocytosis. Component of the SNARE complex composed of STX7, STX8, VAMP7 and VTI1B that is required for heterotypic fusion of late endosomes with lysosomes. May interact with STX17. Interacts with PICALM. Interacts with RAB21. Detected in all tissues tested.

It is found in the cytoplasmic vesicle. Its subcellular location is the secretory vesicle membrane. It localises to the golgi apparatus. The protein localises to the trans-Golgi network membrane. The protein resides in the late endosome membrane. It is found in the lysosome membrane. Its subcellular location is the endoplasmic reticulum membrane. It localises to the phagosome membrane. The protein localises to the synapse. The protein resides in the synaptosome. In terms of biological role, involved in the targeting and/or fusion of transport vesicles to their target membrane during transport of proteins from the early endosome to the lysosome. Required for heterotypic fusion of late endosomes with lysosomes and homotypic lysosomal fusion. Required for calcium regulated lysosomal exocytosis. Involved in the export of chylomicrons from the endoplasmic reticulum to the cis Golgi. Required for exocytosis of mediators during eosinophil and neutrophil degranulation, and target cell killing by natural killer cells. Required for focal exocytosis of late endocytic vesicles during phagosome formation. This chain is Vesicle-associated membrane protein 7 (VAMP7), found in Homo sapiens (Human).